The primary structure comprises 298 residues: Probable alpha-L-glutamate ligase (298 aa).

In terms of domain architecture, ATP-grasp spans 108–290 (LQLLLKTGVP…IAAEIIDYIE (183 aa)). ATP is bound by residues K144, 181–182 (DF), D190, and 214–216 (RAN). Positions 251, 263, and 265 each coordinate Mg(2+). 3 residues coordinate Mn(2+): D251, E263, and N265.

This sequence belongs to the RimK family. It depends on Mg(2+) as a cofactor. Mn(2+) is required as a cofactor.

The protein is Probable alpha-L-glutamate ligase of Haemophilus influenzae (strain PittEE).